We begin with the raw amino-acid sequence, 311 residues long: DNA repair and recombination protein RadA (311 aa).

104-111 provides a ligand contact to ATP; that stretch reads GEFGSGKS.

It belongs to the eukaryotic RecA-like protein family.

Involved in DNA repair and in homologous recombination. Binds and assemble on single-stranded DNA to form a nucleoprotein filament. Hydrolyzes ATP in a ssDNA-dependent manner and promotes DNA strand exchange between homologous DNA molecules. This chain is DNA repair and recombination protein RadA, found in Methanobrevibacter smithii (strain ATCC 35061 / DSM 861 / OCM 144 / PS).